The following is a 678-amino-acid chain: DNA ligase (678 aa).

NAD(+) is bound by residues 35 to 39, 84 to 85, and glutamate 116; these read DSVYD and SL. Catalysis depends on lysine 118, which acts as the N6-AMP-lysine intermediate. The NAD(+) site is built by arginine 139, glutamate 178, lysine 297, and lysine 321. Positions 415, 418, 433, and 438 each coordinate Zn(2+). Residues 600–678 form the BRCT domain; that stretch reads DGNQIFAGKT…EAQLLEMLNE (79 aa).

It belongs to the NAD-dependent DNA ligase family. LigA subfamily. Mg(2+) is required as a cofactor. It depends on Mn(2+) as a cofactor.

The catalysed reaction is NAD(+) + (deoxyribonucleotide)n-3'-hydroxyl + 5'-phospho-(deoxyribonucleotide)m = (deoxyribonucleotide)n+m + AMP + beta-nicotinamide D-nucleotide.. Functionally, DNA ligase that catalyzes the formation of phosphodiester linkages between 5'-phosphoryl and 3'-hydroxyl groups in double-stranded DNA using NAD as a coenzyme and as the energy source for the reaction. It is essential for DNA replication and repair of damaged DNA. This is DNA ligase from Nostoc punctiforme (strain ATCC 29133 / PCC 73102).